Consider the following 656-residue polypeptide: Macrolide export ATP-binding/permease protein MacB (656 aa).

The region spanning 6–244 (LEVSACYRSF…AAPKTEVIPA (239 aa)) is the ABC transporter domain. 42–49 (GASGSGKS) serves as a coordination point for ATP. 4 helical membrane passes run 277-297 (FLTM…VALG), 531-551 (LLIS…VMNI), 586-606 (LVCL…GVVF), and 621-641 (SIVA…FLPA).

This sequence belongs to the ABC transporter superfamily. Macrolide exporter (TC 3.A.1.122) family. Homodimer. Part of the tripartite efflux system MacAB-TolC, which is composed of an inner membrane transporter, MacB, a periplasmic membrane fusion protein, MacA, and an outer membrane component, TolC. The complex forms a large protein conduit and can translocate molecules across both the inner and outer membranes. Interacts with MacA.

The protein localises to the cell inner membrane. In terms of biological role, part of the tripartite efflux system MacAB-TolC. MacB is a non-canonical ABC transporter that contains transmembrane domains (TMD), which form a pore in the inner membrane, and an ATP-binding domain (NBD), which is responsible for energy generation. Confers resistance against macrolides. This chain is Macrolide export ATP-binding/permease protein MacB, found in Shewanella sp. (strain ANA-3).